Reading from the N-terminus, the 110-residue chain is UPF0060 membrane protein Francci3_2786 (110 aa).

4 helical membrane passes run 8-28 (LLFV…WQGV), 33-53 (GPVW…VATL), 62-82 (ILAA…VAVD), and 87-107 (DRYD…IMYA).

It belongs to the UPF0060 family.

The protein localises to the cell membrane. The sequence is that of UPF0060 membrane protein Francci3_2786 from Frankia casuarinae (strain DSM 45818 / CECT 9043 / HFP020203 / CcI3).